A 299-amino-acid chain; its full sequence is Lipoyl synthase (299 aa).

Positions 45, 50, 56, 71, 75, 78, and 284 each coordinate [4Fe-4S] cluster. In terms of domain architecture, Radical SAM core spans 57–273; it reads YSKGTATFMI…GDVALAKDFL (217 aa).

Belongs to the radical SAM superfamily. Lipoyl synthase family. Requires [4Fe-4S] cluster as cofactor.

Its subcellular location is the cytoplasm. The catalysed reaction is [[Fe-S] cluster scaffold protein carrying a second [4Fe-4S](2+) cluster] + N(6)-octanoyl-L-lysyl-[protein] + 2 oxidized [2Fe-2S]-[ferredoxin] + 2 S-adenosyl-L-methionine + 4 H(+) = [[Fe-S] cluster scaffold protein] + N(6)-[(R)-dihydrolipoyl]-L-lysyl-[protein] + 4 Fe(3+) + 2 hydrogen sulfide + 2 5'-deoxyadenosine + 2 L-methionine + 2 reduced [2Fe-2S]-[ferredoxin]. It participates in protein modification; protein lipoylation via endogenous pathway; protein N(6)-(lipoyl)lysine from octanoyl-[acyl-carrier-protein]: step 2/2. Its function is as follows. Catalyzes the radical-mediated insertion of two sulfur atoms into the C-6 and C-8 positions of the octanoyl moiety bound to the lipoyl domains of lipoate-dependent enzymes, thereby converting the octanoylated domains into lipoylated derivatives. The protein is Lipoyl synthase of Desulfotalea psychrophila (strain LSv54 / DSM 12343).